A 299-amino-acid polypeptide reads, in one-letter code: rRNA methyltransferase (299 aa).

A disordered region spans residues 14–53; the sequence is AEKRSGRGRMAAARTTGAQSRKTAQRSGRSEADRRRRVHG. Over residues 21–31 the composition is skewed to low complexity; the sequence is GRMAAARTTGA. S-adenosyl-L-methionine contacts are provided by N55, L57, G82, E103, D128, and N144.

It belongs to the class I-like SAM-binding methyltransferase superfamily. rRNA adenine N(6)-methyltransferase family.

Probable RNA methylase. Confers resistance to carbomycin and several other macrolides, lincomycin and vernamycin B, but not to all macrolide-lincosamide-streptogramin B antibiotics. The protein is rRNA methyltransferase (carB) of Streptomyces thermotolerans.